The sequence spans 852 residues: Gamma-tubulin complex component 2 homolog (852 aa).

Phosphoserine is present on serine 73.

Belongs to the TUBGCP family. Gamma-tubulin small complex (Gamma TuSC) is a heterotetrameric complex which contains two molecules of gamma-tubulin, and one molecule each of Dgrip84 and Dgrip91. The gamma-tubulin in this complex binds preferentially to GDP over GTP.

It localises to the cytoplasm. The protein localises to the cytoskeleton. The protein resides in the microtubule organizing center. Its subcellular location is the centrosome. It is found in the perinuclear region. The protein is Gamma-tubulin complex component 2 homolog (Grip84) of Drosophila melanogaster (Fruit fly).